Reading from the N-terminus, the 24-residue chain is Brevinin-1BYb (24 aa).

A disulfide bridge connects residues Cys-18 and Cys-24.

Expressed by the skin glands.

Its subcellular location is the secreted. Antibacterial activity against Gram-positive bacterium S.aureus and Gram-negative bacterium E.coli. Has moderate antifungal activity against C.albicans and strong hemolytic activity. The chain is Brevinin-1BYb from Rana boylii (Foothill yellow-legged frog).